A 258-amino-acid polypeptide reads, in one-letter code: UPF0246 protein YaaA (258 aa).

Belongs to the UPF0246 family.

This is UPF0246 protein YaaA from Escherichia coli O127:H6 (strain E2348/69 / EPEC).